The chain runs to 101 residues: Putative metal transport protein HQ_3622A (101 aa).

An N-terminal signal peptide occupies residues 1–32 (MKIISMSMDSWIQRAALMLLGLVIVAPFFGWT). The helical transmembrane segment at 75–95 (IGTLISAGVGTVLTLIVAFGA) threads the bilayer.

It localises to the cell membrane. May be involved in metal transport. The protein is Putative metal transport protein HQ_3622A of Haloquadratum walsbyi (strain DSM 16790 / HBSQ001).